Reading from the N-terminus, the 314-residue chain is MAFIYNGSQTTVTEFILLGLTDDPVLKVILFCIILCIYLVTVFGNLSTILLIGVSSKLHHPMYFFLSHLASVDMGLSSSVTPNMLVNFLTEKNTISYLGCGIQLSSAAFFGAVEFFLLAAMAYDRLVAICNPLLYSTKMSSQVCIQLVAGSYVGGFLNASFVTHFFFSFLFCGPNRVNHFFCDLSPMMELSCSDVSISEIVISFSAGSFTMTTLFVIVIPYFYIFITILKIRSTEGRQKAFSTCTSHLTAVTLYYGTIIFIYVMPKSTYSRDQNKVVSLFYMLVIPVLNPLIYSLRNNEIKDALKRQFYRKTLL.

The Extracellular segment spans residues 1–28 (MAFIYNGSQTTVTEFILLGLTDDPVLKV). N-linked (GlcNAc...) asparagine glycosylation is present at asparagine 6. A helical membrane pass occupies residues 29–49 (ILFCIILCIYLVTVFGNLSTI). Residues 50-57 (LLIGVSSK) lie on the Cytoplasmic side of the membrane. The helical transmembrane segment at 58-78 (LHHPMYFFLSHLASVDMGLSS) threads the bilayer. Topologically, residues 79-102 (SVTPNMLVNFLTEKNTISYLGCGI) are extracellular. Residues cysteine 100 and cysteine 192 are joined by a disulfide bond. The chain crosses the membrane as a helical span at residues 103-123 (QLSSAAFFGAVEFFLLAAMAY). Topologically, residues 124–136 (DRLVAICNPLLYS) are cytoplasmic. A helical transmembrane segment spans residues 137-157 (TKMSSQVCIQLVAGSYVGGFL). Residues 158 to 199 (NASFVTHFFFSFLFCGPNRVNHFFCDLSPMMELSCSDVSISE) lie on the Extracellular side of the membrane. The helical transmembrane segment at 200 to 220 (IVISFSAGSFTMTTLFVIVIP) threads the bilayer. Topologically, residues 221-240 (YFYIFITILKIRSTEGRQKA) are cytoplasmic. The helical transmembrane segment at 241-261 (FSTCTSHLTAVTLYYGTIIFI) threads the bilayer. Residues 262–274 (YVMPKSTYSRDQN) are Extracellular-facing. Residues 275–295 (KVVSLFYMLVIPVLNPLIYSL) form a helical membrane-spanning segment. Topologically, residues 296-314 (RNNEIKDALKRQFYRKTLL) are cytoplasmic.

Belongs to the G-protein coupled receptor 1 family.

It is found in the cell membrane. In terms of biological role, potential odorant receptor. This chain is Olfactory receptor 5P62, found in Mus musculus (Mouse).